The following is a 223-amino-acid chain: Noggin (223 aa).

An N-terminal signal peptide occupies residues 1–26 (MDHSQCLVTIYAAAVLLGLRLQQGSC). An N-linked (GlcNAc...) asparagine glycan is attached at N61. Disulfide bonds link C146–C183, C169–C219, C175–C221, and C198–C206.

Belongs to the noggin family. As to quaternary structure, homodimer.

The protein resides in the secreted. Functionally, inhibitor of bone morphogenetic proteins (BMP) signaling. Controls somitogenesis by sequestering the BMP-4 activity which in turn differentiates distinct subtypes of the mesoderm along the mediolateral axis. This chain is Noggin (NOG), found in Gallus gallus (Chicken).